Here is a 511-residue protein sequence, read N- to C-terminus: Maturase K (511 aa).

It belongs to the intron maturase 2 family. MatK subfamily.

It localises to the plastid. The protein localises to the chloroplast. In terms of biological role, usually encoded in the trnK tRNA gene intron. Probably assists in splicing its own and other chloroplast group II introns. In Hordeum secalinum (Meadow barley), this protein is Maturase K.